The following is a 474-amino-acid chain: Probable diacyglycerol O-acyltransferase Tgs4 (474 aa).

Residue histidine 135 is the Proton acceptor of the active site.

The protein belongs to the long-chain O-acyltransferase family.

The enzyme catalyses an acyl-CoA + a 1,2-diacyl-sn-glycerol = a triacyl-sn-glycerol + CoA. The protein operates within glycerolipid metabolism; triacylglycerol biosynthesis. Its function is as follows. Required for maintaining the appropriate mycolic acid composition and permeability of the envelope on its exposure to acidic pH. The protein is Probable diacyglycerol O-acyltransferase Tgs4 (tgs4) of Mycobacterium tuberculosis (strain CDC 1551 / Oshkosh).